Reading from the N-terminus, the 299-residue chain is uncharacterized protein (299 aa).

A helical membrane pass occupies residues 4–20 (LFFIFVMLIVLLCGCTS).

Its subcellular location is the membrane. This is an uncharacterized protein from Methanocaldococcus jannaschii (strain ATCC 43067 / DSM 2661 / JAL-1 / JCM 10045 / NBRC 100440) (Methanococcus jannaschii).